We begin with the raw amino-acid sequence, 503 residues long: MTAVADAPQADIEGVASPQAVVVGVMAGEGVQIGVLLDANAPVSVMTDPLLKVVNSRLRELGEAPLEATGRGRWALCLVDGAPLRATQSLTEQDVYDGDRLWIRFIADTERRSQVIEHISTAVASDLSKRFARIDPIVAVQVGASMVATGVVLATGVLGWWRWHHNTWLTTIYTAVIGVLVLAVAMLLLMRAKTDADRRVADIMLMSAIMPVTVAAAAAPPGPVGSPQAVLGFGVLTVAAALALRFTGRRLGIYTTIVIIGALTMLAALARMVAATSAVTLLSSLLLICVVAYHAAPALSRRLAGIRLPVFPSATSRWVFEARPDLPTTVVVSGGSAPVLEGPSSVRDVLLQAERARSFLSGLLTGLGVMVVVCMTSLCDPHTGQRWLPLILAGFTSGFLLLRGRSYVDRWQSITLAGTAVIIAAAVCVRYALELSSPLAVSIVAAILVLLPAAGMAAAAHVPHTIYSPLFRKFVEWIEYLCLMPIFPLALWLMNVYAAIRYR.

Transmembrane regions (helical) follow at residues 137–157, 169–189, 200–220, 224–244, 250–270, 272–292, 359–379, 382–402, 413–433, 439–459, and 480–500; these read IVAV…ATGV, LTTI…MLLL, VADI…AAAP, VGSP…ALAL, RLGI…AALA, MVAA…CVVA, FLSG…TSLC, HTGQ…FLLL, SITL…RYAL, LAVS…MAAA, and YLCL…YAAI.

This sequence belongs to the EccD/Snm4 family. As to quaternary structure, part of the ESX-5 / type VII secretion system (T7SS), which is composed of cytosolic and membrane components. The ESX-5 membrane complex is composed of EccB5, EccC5, EccD5 and EccE5.

Its subcellular location is the cell inner membrane. Part of the ESX-5 specialized secretion system, which is responsible for the secretion of EsxN and a number of PE_PGRS and PPE proteins, including PPE41. The protein is ESX-5 secretion system protein EccD5 of Mycobacterium tuberculosis (strain CDC 1551 / Oshkosh).